We begin with the raw amino-acid sequence, 456 residues long: Methylenetetrahydrofolate--tRNA-(uracil-5-)-methyltransferase TrmFO (456 aa).

An FAD-binding site is contributed by 7–12 (GAGLAG).

Belongs to the MnmG family. TrmFO subfamily. The cofactor is FAD.

The protein localises to the cytoplasm. The enzyme catalyses uridine(54) in tRNA + (6R)-5,10-methylene-5,6,7,8-tetrahydrofolate + NADH + H(+) = 5-methyluridine(54) in tRNA + (6S)-5,6,7,8-tetrahydrofolate + NAD(+). The catalysed reaction is uridine(54) in tRNA + (6R)-5,10-methylene-5,6,7,8-tetrahydrofolate + NADPH + H(+) = 5-methyluridine(54) in tRNA + (6S)-5,6,7,8-tetrahydrofolate + NADP(+). Catalyzes the folate-dependent formation of 5-methyl-uridine at position 54 (M-5-U54) in all tRNAs. The protein is Methylenetetrahydrofolate--tRNA-(uracil-5-)-methyltransferase TrmFO of Synechococcus sp. (strain RCC307).